The chain runs to 157 residues: Cell cycle regulator of non-homologous end joining (157 aa).

Met1 bears the N-acetylmethionine mark. Residues 1–21 (METLKSKTKTRVLPSWMTAPV) carry the KBM motif. Positions 80-91 (KPWEQRSLEATD) are enriched in basic and acidic residues. The tract at residues 80–148 (KPWEQRSLEA…EEEKEEEDAL (69 aa)) is disordered. Residues 96–106 (SPPCSSSPGSS) are compositionally biased toward low complexity. An XLM motif is present at residues 147–157 (ALKYVREIFFS).

Interacts (via KBM motif) with XRCC5/Ku80 and XRCC6/Ku70 heterodimer. Interacts (via XLF motif) with TRIM28/KAP1, ATM, MRE11, NBN and RAD50. Interacts with splicing factor SF3B1. Interacts with ERCC6L2; this interaction is DNA independent.

The protein localises to the cytoplasm. It is found in the nucleus. It localises to the chromosome. Functionally, cell-cycle-specific regulator of classical non-homologous end joining (NHEJ) of DNA double-strand break (DSB) repair, which can act both as an activator or inhibitor of NHEJ, depending on the cell cycle phase. Acts as a regulator of DNA repair pathway choice by specifically inhibiting classical NHEJ during the S and G2 phases, thereby promoting error-free repair by homologous recombination during cell cycle phases when sister chromatids are present. Preferentially protects single-stranded overhangs at break sites by inhibiting classical NHEJ, thereby creating a local environment that favors homologous recombination. Acts via interaction with XRCC5/Ku80 and XRCC6/Ku70. In contrast, acts as an activator of NHEJ during G1 phase of the cell cycle: promotes classical NHEJ in G1 phase cells via multivalent interactions that increase the affinity of DNA damage response proteins for DSB-associated chromatin. Also involved in immunoglobulin V(D)J recombination. May also act as an indirect regulator of proteasome. The chain is Cell cycle regulator of non-homologous end joining from Mus musculus (Mouse).